The primary structure comprises 147 residues: 3-dehydroquinate dehydratase (147 aa).

The active-site Proton acceptor is the Tyr24. Residues Asn74, His80, and Asp87 each coordinate substrate. His100 serves as the catalytic Proton donor. Substrate is bound by residues 101 to 102 (LS) and Arg111.

The protein belongs to the type-II 3-dehydroquinase family. In terms of assembly, homododecamer.

It catalyses the reaction 3-dehydroquinate = 3-dehydroshikimate + H2O. It participates in metabolic intermediate biosynthesis; chorismate biosynthesis; chorismate from D-erythrose 4-phosphate and phosphoenolpyruvate: step 3/7. Functionally, catalyzes a trans-dehydration via an enolate intermediate. This chain is 3-dehydroquinate dehydratase, found in Azorhizobium caulinodans (strain ATCC 43989 / DSM 5975 / JCM 20966 / LMG 6465 / NBRC 14845 / NCIMB 13405 / ORS 571).